Reading from the N-terminus, the 129-residue chain is Small ribosomal subunit protein uS11 (129 aa).

It belongs to the universal ribosomal protein uS11 family. Part of the 30S ribosomal subunit. Interacts with proteins S7 and S18. Binds to IF-3.

Its function is as follows. Located on the platform of the 30S subunit, it bridges several disparate RNA helices of the 16S rRNA. Forms part of the Shine-Dalgarno cleft in the 70S ribosome. The polypeptide is Small ribosomal subunit protein uS11 (Buchnera aphidicola subsp. Baizongia pistaciae (strain Bp)).